The following is a 491-amino-acid chain: MKNQDQALIFEVSKEGRIGYSLPKLDVEEVKLEDVFESDYIRVEDAELPEVSELDIMRHYTALSNRNHGVDSGFYPLGSCTMKYNPKINESVARFAGFANIHPLQDEKTVQGAMELMYDLQEHLIEITGMDTVTLQPAAGAHGEWTGLMLIRAYHEANGDFNRTKVIVPDSAHGTNPASATVAGFETITVKSNEHGLVDLEDLKRVVNEETAALMLTNPNTLGLFEENILEMAEIVHNAGGKLYYDGANLNAVLSQARPGDMGFDVVHLNLHKTFTGPHGGGGPGSGPVGVKADLIPYLPKPILEKTENGYHFNYDRPEAIGRVKPFYGNFGINVRAYTYIRSMGPDGLRAVTEYAVLNANYMMRRLAPFYDLPFDRHCKHEFVLSGRRQKKLGVRTLDIAKRLLDFGYHPPTIYFPLNVEECIMIEPTETESKETLDGFIDKMIQIAKEVEENPEVVQEAPHTTVIKRLDETMAARKPVLRYEKPAPVQV.

Lysine 273 is modified (N6-(pyridoxal phosphate)lysine).

This sequence belongs to the GcvP family. C-terminal subunit subfamily. In terms of assembly, the glycine cleavage system is composed of four proteins: P, T, L and H. In this organism, the P 'protein' is a heterodimer of two subunits. The cofactor is pyridoxal 5'-phosphate.

The enzyme catalyses N(6)-[(R)-lipoyl]-L-lysyl-[glycine-cleavage complex H protein] + glycine + H(+) = N(6)-[(R)-S(8)-aminomethyldihydrolipoyl]-L-lysyl-[glycine-cleavage complex H protein] + CO2. The glycine cleavage system catalyzes the degradation of glycine. The P protein binds the alpha-amino group of glycine through its pyridoxal phosphate cofactor; CO(2) is released and the remaining methylamine moiety is then transferred to the lipoamide cofactor of the H protein. The protein is Probable glycine dehydrogenase (decarboxylating) subunit 2 of Bacillus cereus (strain AH187).